Reading from the N-terminus, the 445-residue chain is V-type proton ATPase subunit H (445 aa).

The protein belongs to the V-ATPase H subunit family. In terms of assembly, V-ATPase is a heteromultimeric enzyme composed of a peripheral catalytic V1 complex (components A to H) attached to an integral membrane V0 proton pore complex (components: a, c, c', c'' and d).

Functionally, subunit of the peripheral V1 complex of vacuolar ATPase. Subunit H activates the ATPase activity of the enzyme and couples ATPase activity to proton flow. Vacuolar ATPase is responsible for acidifying a variety of intracellular compartments in eukaryotic cells, thus providing most of the energy required for transport processes in the vacuolar system. In Dictyostelium discoideum (Social amoeba), this protein is V-type proton ATPase subunit H (vatH).